The following is a 71-amino-acid chain: uncharacterized protein (71 aa).

This is an uncharacterized protein from Dictyostelium discoideum (Social amoeba).